The following is a 584-amino-acid chain: 2-succinyl-5-enolpyruvyl-6-hydroxy-3-cyclohexene-1-carboxylate synthase (584 aa).

This sequence belongs to the TPP enzyme family. MenD subfamily. As to quaternary structure, homodimer. Mg(2+) is required as a cofactor. Requires Mn(2+) as cofactor. It depends on thiamine diphosphate as a cofactor.

The catalysed reaction is isochorismate + 2-oxoglutarate + H(+) = 5-enolpyruvoyl-6-hydroxy-2-succinyl-cyclohex-3-ene-1-carboxylate + CO2. It functions in the pathway quinol/quinone metabolism; 1,4-dihydroxy-2-naphthoate biosynthesis; 1,4-dihydroxy-2-naphthoate from chorismate: step 2/7. It participates in quinol/quinone metabolism; menaquinone biosynthesis. Catalyzes the thiamine diphosphate-dependent decarboxylation of 2-oxoglutarate and the subsequent addition of the resulting succinic semialdehyde-thiamine pyrophosphate anion to isochorismate to yield 2-succinyl-5-enolpyruvyl-6-hydroxy-3-cyclohexene-1-carboxylate (SEPHCHC). The sequence is that of 2-succinyl-5-enolpyruvyl-6-hydroxy-3-cyclohexene-1-carboxylate synthase from Bacillus cereus (strain ATCC 10987 / NRS 248).